The chain runs to 331 residues: 6-phosphogluconolactonase (331 aa).

The protein belongs to the cycloisomerase 2 family.

It catalyses the reaction 6-phospho-D-glucono-1,5-lactone + H2O = 6-phospho-D-gluconate + H(+). Its pathway is carbohydrate degradation; pentose phosphate pathway; D-ribulose 5-phosphate from D-glucose 6-phosphate (oxidative stage): step 2/3. Catalyzes the hydrolysis of 6-phosphogluconolactone to 6-phosphogluconate. In Salmonella gallinarum (strain 287/91 / NCTC 13346), this protein is 6-phosphogluconolactonase.